Consider the following 127-residue polypeptide: Putative membrane protein insertion efficiency factor (127 aa).

Residues 71-106 (DPPPPPRLHRAAAARMPRQRDADPRDTTRCSSTGAE) form a disordered region. Positions 88-98 (RQRDADPRDTT) are enriched in basic and acidic residues.

It belongs to the UPF0161 family.

Its subcellular location is the cell inner membrane. In terms of biological role, could be involved in insertion of integral membrane proteins into the membrane. This chain is Putative membrane protein insertion efficiency factor, found in Sorangium cellulosum (strain So ce56) (Polyangium cellulosum (strain So ce56)).